Reading from the N-terminus, the 206-residue chain is Large ribosomal subunit protein mL40 (206 aa).

Residues M1–R46 constitute a mitochondrion transit peptide. The segment at L168–Y192 is disordered.

The protein belongs to the mitochondrion-specific ribosomal protein mL40 family. Component of the mitochondrial large ribosomal subunit (mt-LSU). Mature mammalian 55S mitochondrial ribosomes consist of a small (28S) and a large (39S) subunit. The 28S small subunit contains a 12S ribosomal RNA (12S mt-rRNA) and 30 different proteins. The 39S large subunit contains a 16S rRNA (16S mt-rRNA), a copy of mitochondrial valine transfer RNA (mt-tRNA(Val)), which plays an integral structural role, and 52 different proteins. mL40 binds to the major groove of the anticodon stem of mt-tRNA(Val) in the central protuberance. As to expression, ubiquitous.

It is found in the mitochondrion. This chain is Large ribosomal subunit protein mL40 (MRPL40), found in Homo sapiens (Human).